We begin with the raw amino-acid sequence, 289 residues long: Carbonyl reductase [NADPH] 1 (289 aa).

Serine 2 carries the N-acetylserine modification. Phosphoserine is present on serine 2. NADP(+)-binding positions include 10–34 (VTGA…GDVV), 63–64 (DI), and asparagine 90. Glutathione contacts are provided by residues 95–97 (FQL) and glutamine 106. Position 140 (serine 140) interacts with substrate. A glutathione-binding site is contributed by 193–194 (TY). The Proton acceptor role is filled by tyrosine 194. Residues 194-198 (YGVTK) and 231-233 (VRT) each bind NADP(+). Lysine 239 is subject to N6-1-carboxyethyl lysine.

This sequence belongs to the short-chain dehydrogenases/reductases (SDR) family. As to quaternary structure, monomer. In terms of tissue distribution, expressed in kidney (at protein level).

Its subcellular location is the cytoplasm. It catalyses the reaction a secondary alcohol + NADP(+) = a ketone + NADPH + H(+). The enzyme catalyses prostaglandin E1 + NADP(+) = 15-oxoprostaglandin E1 + NADPH + H(+). The catalysed reaction is prostaglandin F2alpha + NADP(+) = prostaglandin E2 + NADPH + H(+). It carries out the reaction prostaglandin D2 + NADP(+) = 15-oxoprostaglandin D2 + NADPH + H(+). It catalyses the reaction prostaglandin E2 + NADP(+) = 15-oxoprostaglandin E2 + NADPH + H(+). The enzyme catalyses prostaglandin F2alpha + NADP(+) = 15-oxoprostaglandin F2alpha + NADPH + H(+). The catalysed reaction is menadione + NADPH + H(+) = menadiol + NADP(+). It carries out the reaction daunorubicin + NADPH + H(+) = 13-dihydrodaunorubicin + NADP(+). It catalyses the reaction S-nitrosoglutathione + NADPH + H(+) = S-(hydroxysulfenamide)glutathione + NADP(+). The enzyme catalyses a primary alcohol + NADP(+) = an aldehyde + NADPH + H(+). The catalysed reaction is cortisol + NADPH + H(+) = 20beta-dihydrocortisol + NADP(+). It carries out the reaction corticosterone + NADPH + H(+) = 20beta-dihydrocorticosterone + NADP(+). Functionally, NADPH-dependent reductase with broad substrate specificity. Catalyzes the reduction of a wide variety of carbonyl compounds including quinones, prostaglandins, menadione, plus various xenobiotics. Catalyzes the reduction of the antitumor anthracyclines doxorubicin and daunorubicin to the cardiotoxic compounds doxorubicinol and daunorubicinol. Can convert prostaglandin E2 to prostaglandin F2-alpha. Can bind glutathione, which explains its higher affinity for glutathione-conjugated substrates. Catalyzes the reduction of S-nitrosoglutathione. In addition, participates in the glucocorticoid metabolism by catalyzing the NADPH-dependent cortisol/corticosterone into 20beta-dihydrocortisol (20b-DHF) or 20beta-corticosterone (20b-DHB), which are weak agonists of NR3C1 and NR3C2 in adipose tissue. The polypeptide is Carbonyl reductase [NADPH] 1 (Sus scrofa (Pig)).